A 418-amino-acid chain; its full sequence is Actin-related protein 3 (418 aa).

Belongs to the actin family. ARP3 subfamily. As to quaternary structure, component of the Arp2/3 complex composed of actr2/arp2, actr3/arp3, arpc1b, arpc2, arpc3, arpc4 and arpc5.

It localises to the cytoplasm. It is found in the cytoskeleton. Its subcellular location is the cell projection. The protein localises to the nucleus. In terms of biological role, ATP-binding component of the Arp2/3 complex, a multiprotein complex that mediates actin polymerization upon stimulation by nucleation-promoting factor (NPF). The Arp2/3 complex mediates the formation of branched actin networks in the cytoplasm, providing the force for cell motility. Seems to contact the pointed end of the daughter actin filament. In addition to its role in the cytoplasmic cytoskeleton, the Arp2/3 complex also promotes actin polymerization in the nucleus, thereby regulating gene transcription and repair of damaged DNA. The Arp2/3 complex promotes homologous recombination (HR) repair in response to DNA damage by promoting nuclear actin polymerization, leading to drive motility of double-strand breaks (DSBs). This is Actin-related protein 3 (actr3) from Takifugu rubripes (Japanese pufferfish).